Consider the following 162-residue polypeptide: HTH-type transcriptional regulator IscR (162 aa).

Residues 2–131 enclose the HTH rrf2-type domain; that stretch reads RLTSKGRYAV…NNITLGELVN (130 aa). The segment at residues 28–51 is a DNA-binding region (H-T-H motif); that stretch reads LADISERQGISLSYLEQLFSRLRK. Positions 92, 98, and 104 each coordinate [2Fe-2S] cluster.

It depends on [2Fe-2S] cluster as a cofactor.

In terms of biological role, regulates the transcription of several operons and genes involved in the biogenesis of Fe-S clusters and Fe-S-containing proteins. The chain is HTH-type transcriptional regulator IscR from Shigella sonnei (strain Ss046).